A 617-amino-acid chain; its full sequence is Chaperone protein DnaK (617 aa).

Threonine 174 carries the post-translational modification Phosphothreonine; by autocatalysis. A compositionally biased stretch (low complexity) spans 575–592 (AQAQQQAQQQAQGQQGAQ). Residues 575–617 (AQAQQQAQQQAQGQQGAQTDNQTGQNDGKTIDVDYEEVDDDDK) are disordered. The span at 593–602 (TDNQTGQNDG) shows a compositional bias: polar residues. Residues 607–617 (VDYEEVDDDDK) are compositionally biased toward acidic residues.

It belongs to the heat shock protein 70 family.

Its function is as follows. Acts as a chaperone. The sequence is that of Chaperone protein DnaK from Halothermothrix orenii (strain H 168 / OCM 544 / DSM 9562).